The chain runs to 451 residues: Trigger factor (451 aa).

A PPIase FKBP-type domain is found at 165-250 (DDKLTIDFEG…LHQIQVREAL (86 aa)).

Belongs to the FKBP-type PPIase family. Tig subfamily.

Its subcellular location is the cytoplasm. The catalysed reaction is [protein]-peptidylproline (omega=180) = [protein]-peptidylproline (omega=0). Functionally, involved in protein export. Acts as a chaperone by maintaining the newly synthesized protein in an open conformation. Functions as a peptidyl-prolyl cis-trans isomerase. In Helicobacter pylori (strain P12), this protein is Trigger factor.